We begin with the raw amino-acid sequence, 141 residues long: Ribonuclease VapC38 (141 aa).

Positions 5 and 102 each coordinate Mg(2+).

The protein belongs to the PINc/VapC protein family. Requires Mg(2+) as cofactor.

The protein localises to the secreted. Its function is as follows. Toxic component of a type II toxin-antitoxin (TA) system. An RNase. Its cognate antitoxin is VapB38. This chain is Ribonuclease VapC38, found in Mycobacterium tuberculosis (strain ATCC 25618 / H37Rv).